A 467-amino-acid chain; its full sequence is Iroquois-class homeodomain protein irx-1-A (467 aa).

A DNA-binding region (homeobox; TALE-type) is located at residues 126-188 (DPGRPKNATR…NARRRLKKEN (63 aa)). Disordered stretches follow at residues 197–306 (KEDD…PPHS), 318–344 (TSPD…QHPA), and 410–467 (SLSS…LPSA). Composition is skewed to acidic residues over residues 215 to 225 (EDDEEIDLESI) and 233 to 244 (NDGEQSNEEEDE). The span at 245–262 (KLEHLRQGEKESLKKESE) shows a compositional bias: basic and acidic residues. The segment covering 415-431 (KTPERTSPKHSDRENVP) has biased composition (basic and acidic residues). Residues 447 to 460 (RENTLSQQEGTSRI) show a composition bias toward polar residues.

It belongs to the TALE/IRO homeobox family. As to expression, expressed early in neural differentiation in the neural plate, and expression continues in the neural tube after neural fold closure. Expressed in the presumptive midbrain territory. Also expressed in the prospective neural crest and the preplacodal field, anterior to the neural plate. Strongly expressed in the profundal placode and weakly expressed in the trigeminal placode. Also expressed in the mesoderm in the Spemann organizer from the start of gastrulation, and subsequently in its derivatives; namely in the notochord as well as in the somites of stage 25 embryos, and the somites and notochord of tailbud embryos. Also expressed in specific and overlapping dynamic patterns with irx2 and irx3 during pronephric kidney development. Renal expression begins in the dorsal region of the pronephric anlage at mid neurula stage and continues to at least tailbud stages where expression is confined to the intermediate tubule segment IT1. Renal expression is maintained at tadpole stages.

It localises to the nucleus. Acts partially redundantly with other irx members in neural patterning. Required for formation of the posterior forebrain, midbrain, hindbrain, and to a lesser extent, spinal cord. Acts early in neural plate development to induce expression of some but not all proneural genes, and specify a neural precursor state. Also up-regulates repressors that prevent neuronal differentiation. Patterns the neuroectoderm in both the anterior/posterior and dorsal/ventral axes. Acts primarily as a transcriptional repressor during neural development, and binds to the bmp4 promoter to repress gene expression and thus mediate down-regulation of bmp4 by wnt signaling. Controls multiple processes through bmp4-repression including neural plate development, neural crest specification and Spemann organizer development. Involved in the specification of the preplacodal field at the anterior border of the neural plate. Regulates the genetic cascade of interactions that are necessary for positioning the isthmus organizer and the formation of the midbrain-hindbrain boundary. Required during at least two stages of pronephros kidney development; during neurula stages, maintains transcription of key renal genes to define the size and identity of the pronephric anlage, probably in part through regulation of bmp-signaling. Subsequently required for proper formation of the intermediate tubule segment of the pronephros. Acts principally as a transcriptional activator during pronephros development. The chain is Iroquois-class homeodomain protein irx-1-A (irx1-a) from Xenopus laevis (African clawed frog).